A 473-amino-acid polypeptide reads, in one-letter code: Serine incorporator 3 (473 aa).

The Extracellular portion of the chain corresponds to 1-96; that stretch reads MGAVLGVFSL…KDCDVLVGYK (96 aa). Asn34 is a glycosylation site (N-linked (GlcNAc...) asparagine). A helical membrane pass occupies residues 97 to 117; it reads AVYRISFAMAIFFFVFSLLMF. The Cytoplasmic segment spans residues 118–132; it reads KVKTSKDLRAAVHNG. A helical membrane pass occupies residues 133 to 153; that stretch reads FWFFKIAALIGIMVGSFYIPG. Over 154–159 the chain is Extracellular; that stretch reads GYFSSV. The helical transmembrane segment at 160–180 threads the bilayer; that stretch reads WFVVGMIGAALFILIQLVLLV. The Cytoplasmic portion of the chain corresponds to 181 to 203; sequence DFAHSWNESWVNRMEEGNPRLWY. A helical transmembrane segment spans residues 204 to 224; it reads AALLSFTSAFYILSIICVGLL. At 225–239 the chain is on the extracellular side; that stretch reads YTYYTKPDGCTENKF. A helical transmembrane segment spans residues 240–260; it reads FISINLILCVVASIISIHPKI. At 261 to 329 the chain is on the cytoplasmic side; that stretch reads QEHQPRSGLL…VPTPTPPSKS (69 aa). Residues 330–350 traverse the membrane as a helical segment; that stretch reads GSLLDSDNFIGLFVFVLCLLY. The Extracellular segment spans residues 351–406; the sequence is SSIRTSTNSQVDKLTLSGSDSVILGDTTTSGASDEEDGQPRRAVDNEKEGVQYSYS. Position 371 is a phosphoserine (Ser371). The chain crosses the membrane as a helical span at residues 407–427; the sequence is LFHLMLCLASLYIMMTLTSWY. At 428 to 446 the chain is on the cytoplasmic side; it reads SPDAKFQSMTSKWPAVWVK. Residues 447 to 467 form a helical membrane-spanning segment; the sequence is ISSSWVCLLLYVWTLVAPLVL. Residues 468–473 are Extracellular-facing; the sequence is TSRDFS.

The protein belongs to the TDE1 family. N-glycosylated. In terms of tissue distribution, ubiquitous. Expression levels were increased fourfold to tenfold in lung tumor tissues compared with normal pulmonary tissues.

The protein resides in the cell membrane. It localises to the golgi apparatus membrane. It is found in the cytoplasm. Its subcellular location is the perinuclear region. It carries out the reaction a 1,2-diacyl-sn-glycero-3-phospho-L-serine(in) = a 1,2-diacyl-sn-glycero-3-phospho-L-serine(out). The catalysed reaction is a 1,2-diacyl-sn-glycero-3-phosphocholine(in) = a 1,2-diacyl-sn-glycero-3-phosphocholine(out). The enzyme catalyses a 1,2-diacyl-sn-glycero-3-phosphoethanolamine(in) = a 1,2-diacyl-sn-glycero-3-phosphoethanolamine(out). Its function is as follows. Restriction factor required to restrict infectivity of lentiviruses, such as HIV-1: acts by inhibiting an early step of viral infection. Impairs the penetration of the viral particle into the cytoplasm. Non-ATP-dependent, non-specific lipid transporter for phosphatidylserine, phosphatidylcholine, and phosphatidylethanolamine. Functions as a scramblase that flips lipids in both directions across the membrane. Phospholipid scrambling results in HIV-1 surface exposure of phosphatidylserine and loss of membrane asymmetry, which leads to changes in HIV-1 Env conformation and loss of infectivity. The chain is Serine incorporator 3 from Homo sapiens (Human).